Reading from the N-terminus, the 491-residue chain is UDP-N-acetylmuramate--L-alanine ligase (491 aa).

Residue G126–T132 coordinates ATP.

Belongs to the MurCDEF family.

It localises to the cytoplasm. The catalysed reaction is UDP-N-acetyl-alpha-D-muramate + L-alanine + ATP = UDP-N-acetyl-alpha-D-muramoyl-L-alanine + ADP + phosphate + H(+). It functions in the pathway cell wall biogenesis; peptidoglycan biosynthesis. In terms of biological role, cell wall formation. This Salmonella paratyphi A (strain ATCC 9150 / SARB42) protein is UDP-N-acetylmuramate--L-alanine ligase.